The chain runs to 126 residues: 5-carboxymethyl-2-hydroxymuconate Delta-isomerase (126 aa).

The Proton acceptor; via imino nitrogen role is filled by Pro-2.

In terms of assembly, homotrimer.

It carries out the reaction (2E,4Z)-5-hydroxypenta-2,4-diene-1,2,5-tricarboxylate = (3E,5R)-5-carboxy-2-oxohept-3-enedioate. It participates in aromatic compound metabolism; 4-hydroxyphenylacetate degradation; pyruvate and succinate semialdehyde from 4-hydroxyphenylacetate: step 4/7. In terms of biological role, transforms 5-carboxymethyl-2-hydroxy-muconic acid (CHM) into 5-oxo-pent-3-ene-1,2,5-tricarboxylic acid (OPET). The chain is 5-carboxymethyl-2-hydroxymuconate Delta-isomerase (hpcD) from Escherichia coli.